The primary structure comprises 127 residues: Evasin-4 (127 aa).

Residues 1 to 23 (MAFKYWFVFAAVLYARQWLSTKC) form the signal peptide. Cystine bridges form between Cys-50–Cys-69, Cys-65–Cys-112, Cys-86–Cys-117, and Cys-107–Cys-126. Residues Asn-54, Asn-64, Asn-70, Asn-77, Asn-83, Asn-106, and Asn-114 are each glycosylated (N-linked (GlcNAc...) asparagine).

This sequence belongs to the evasin C8 family. In terms of assembly, monomer.

The protein resides in the secreted. Its function is as follows. Salivary chemokine-binding protein which has chemokine-neutralizing activity and binds to host chemokines CCL1, CCL3, CCL5, CCL7, CCL8, CCL11, CCL14, CCL15, CCL16, CCL17, CCL18, CCL19, CCL21, CCL22, CCL23, CCL24, CCL25 and CCL26 with nanomolar affinity. Binds to CCL3 and CCL5 with 1:1 stoichiometry. Although binding to CCL25 is observed, does not inhibit CCL25-induced chemotaxis. Has been shown to reduce cardiac injury and inflammation in mice through its anti-CCL5 activity. The chain is Evasin-4 from Rhipicephalus sanguineus (Brown dog tick).